The sequence spans 819 residues: MPAGICGCCGALRPRYKRLVDNIFPEDPRDGLVKADMEKLTFYAVSAPEKLDRIGAYLAERLSRDVMRHRYGNVFIAMEALDQLLMACHSQSIKPFVESFLHMVAKLLESGEPKLQIYGTNSFVKFANIEEDTPSYHRRYDFFVSRFSAMCHSCHDDPEVRKEIRIAGIRGIQGVVRKTVNDELRATIWEPQHMDKIVPSLLFNMQKIEDTDSRTGPPASPTTGDKEENPGILAENCFRELLGRATYGNMNNAVKPVFAHLDHHKLWESNEFAVSCFKIIMYSIQAQYSHHVIQQILVHLDLHKKDSPRIRAGIVQVLLEAVAIAAKGSIGPTVLEVFNTLLKHLTLSVDFELGDRRSSAGSAVFSSSSTRESDERIVQNAIIQTIGFFGSNLPDYQRSEIMMFIMGKVPVFGSSPHMLDTSQLGDMGTKRIQIMLLRSLLMVTSGYKAKTIAAALPPAFLDPLLSPSLMEDCELRQLVLEILHNLIDRHDNRAKLRGIRIIPDVADLKIKREKISKQDVNFMKKHGQQLYRHIYLGCKEDDNVHKNYELLYTTLALVTIELANEEVVIDLIRVAIALQDIAITNEDNLQMFNRCGIMGMVAAYLNFLSQMIAVPAFCQHVSKVIETRNMDATYFLPEVIFRDKCSLPKSLDKHEKNQIFLTNKIAESLGGSGYNVEKLSMPYVPQVTDEDRLSRRKSIVDTISIQVDILSGSNTEDKVNTEEITFESLKKAIDNTGMEEQEKEKRRLVIEKFQKAPFEEIAAQCESKANLLHDKLAQILELTIRPPPSPSGTLTMTAGHAQYQSVPVYEMKFPDLCVY.

The tract at residues 210-230 is disordered; that stretch reads DTDSRTGPPASPTTGDKEENP.

The protein belongs to the EFR3 family. Component of a phosphatidylinositol 4-kinase (PI4K) complex. Palmitoylated at its N-terminus, anchoring the protein to the plasma membrane.

The protein resides in the cell membrane. Component of a complex required to localize phosphatidylinositol 4-kinase (PI4K) to the plasma membrane. The complex acts as a regulator of phosphatidylinositol 4-phosphate (PtdIns(4)P) synthesis. In the complex, efr3a probably acts as the membrane-anchoring component. This chain is Protein EFR3 homolog A (efr3a), found in Xenopus laevis (African clawed frog).